A 502-amino-acid polypeptide reads, in one-letter code: Putative ZDHHC-type palmitoyltransferase 3 (502 aa).

The interval 1-80 (MVNNNNKNNK…ESTNENNKKL (80 aa)) is disordered. The segment covering 10–30 (KINDRENEENEKNKKKDKIYE) has biased composition (basic and acidic residues). A compositionally biased stretch (low complexity) spans 31–52 (NKIGINENNNENNNYQNENFIY). N-linked (GlcNAc...) asparagine glycosylation occurs at Asn-58. The span at 59–73 (DTQEGDISEIQEEST) shows a compositional bias: acidic residues. Transmembrane regions (helical) follow at residues 104–124 (FFIV…IKLV) and 134–154 (LEIS…YNLY). The segment at 200–281 (IANDDPISSS…NNNNNNNKNQ (82 aa)) is disordered. Residues 203–212 (DDPISSSSDF) are compositionally biased toward low complexity. A compositionally biased stretch (acidic residues) spans 213-222 (SDSDDDDQDE). Residues 248–280 (NSNNNNSNNNNNNNKNRNRNNNNNNNNNNNNKN) are compositionally biased toward low complexity. N-linked (GlcNAc...) asparagine glycans are attached at residues Asn-252 and Asn-280. The region spanning 299-349 (KFCITCGLYREPRSFHCSTCNNCVENFDHHCVWIGNCIGRRNYREFFYFIT) is the DHHC domain. The active-site S-palmitoyl cysteine intermediate is Cys-329. A helical membrane pass occupies residues 344–364 (FFYFITTTLIYALYLLSMSIV). Asn-371, Asn-388, and Asn-393 each carry an N-linked (GlcNAc...) asparagine glycan. The chain crosses the membrane as a helical span at residues 419-439 (GLCIFIIIFGFIMSLLLGFLV). 3 N-linked (GlcNAc...) asparagine glycosylation sites follow: Asn-449, Asn-483, and Asn-494.

It belongs to the DHHC palmitoyltransferase family.

The protein resides in the membrane. The enzyme catalyses L-cysteinyl-[protein] + hexadecanoyl-CoA = S-hexadecanoyl-L-cysteinyl-[protein] + CoA. This chain is Putative ZDHHC-type palmitoyltransferase 3, found in Dictyostelium discoideum (Social amoeba).